A 344-amino-acid chain; its full sequence is MFDFLPSSLQVTLPILFKIVAIVLPLILIVAWLTFAERKIIGYMQGRIGPNRVGPRGWLQPIADTVKLLLKEIIIPASANRILFLLAPVLAIAPALAVWAVIPFDAHLVLADINAALLYILAIGSMSVYGIILAGWASNSKYAFLGAMRSAAQVVSYEIAMGFALVGVLIAGGSLNLGEIVQAQEGGFWHWFWLPLFPLFLIYFISGVAETNRLPFDVAEGESEIVAGFHVEYSGMAFALFFLAEYIEMILVSTLAALMFLGGWLSPFQGTVLEAIFEWVPGIVWLLIKTAIFLFFYLWFRATFPRYRYDQIMRLGWKVFIPITIVWLLVVGGARVAQLGPWFT.

8 helical membrane-spanning segments follow: residues L13–L33, I82–I102, A116–W136, M161–V181, F188–V208, L240–F260, V280–F300, and V319–L339.

The protein belongs to the complex I subunit 1 family. NDH-1 is composed of 14 different subunits. Subunits NuoA, H, J, K, L, M, N constitute the membrane sector of the complex.

It localises to the cell inner membrane. It catalyses the reaction a quinone + NADH + 5 H(+)(in) = a quinol + NAD(+) + 4 H(+)(out). NDH-1 shuttles electrons from NADH, via FMN and iron-sulfur (Fe-S) centers, to quinones in the respiratory chain. The immediate electron acceptor for the enzyme in this species is believed to be ubiquinone. Couples the redox reaction to proton translocation (for every two electrons transferred, four hydrogen ions are translocated across the cytoplasmic membrane), and thus conserves the redox energy in a proton gradient. This subunit may bind ubiquinone. This Nitrosococcus oceani (strain ATCC 19707 / BCRC 17464 / JCM 30415 / NCIMB 11848 / C-107) protein is NADH-quinone oxidoreductase subunit H 2.